A 436-amino-acid chain; its full sequence is Probable cinnamyl alcohol dehydrogenase 8B (436 aa).

Position 120 (Cys-120) interacts with Zn(2+). NADP(+) is bound at residue Thr-122. Positions 142, 143, 173, 176, 179, 187, and 236 each coordinate Zn(2+). NADP(+) is bound by residues Thr-240, 261–266 (GLGGLG), 284–289 (STSPGK), Thr-324, Gly-348, and 371–373 (NCV).

Belongs to the zinc-containing alcohol dehydrogenase family. In terms of assembly, homodimer. The cofactor is Zn(2+).

It catalyses the reaction (E)-cinnamyl alcohol + NADP(+) = (E)-cinnamaldehyde + NADPH + H(+). The catalysed reaction is (E)-coniferol + NADP(+) = (E)-coniferaldehyde + NADPH + H(+). The enzyme catalyses (E)-sinapyl alcohol + NADP(+) = (E)-sinapaldehyde + NADPH + H(+). It carries out the reaction (E)-4-coumaroyl alcohol + NADP(+) = (E)-4-coumaraldehyde + NADPH + H(+). It catalyses the reaction (E)-caffeyl alcohol + NADP(+) = (E)-caffeyl aldehyde + NADPH + H(+). The protein operates within aromatic compound metabolism; phenylpropanoid biosynthesis. Involved in lignin biosynthesis. Catalyzes the final step specific for the production of lignin monomers. Catalyzes the NADPH-dependent reduction of coniferaldehyde, 5-hydroxyconiferaldehyde, sinapaldehyde, 4-coumaraldehyde and caffeyl aldehyde to their respective alcohols. This is Probable cinnamyl alcohol dehydrogenase 8B from Oryza sativa subsp. japonica (Rice).